The chain runs to 149 residues: D-aminoacyl-tRNA deacylase (149 aa).

The Gly-cisPro motif, important for rejection of L-amino acids motif lies at 141–142 (GP).

The protein belongs to the DTD family. Homodimer.

It is found in the cytoplasm. The enzyme catalyses glycyl-tRNA(Ala) + H2O = tRNA(Ala) + glycine + H(+). The catalysed reaction is a D-aminoacyl-tRNA + H2O = a tRNA + a D-alpha-amino acid + H(+). Its function is as follows. An aminoacyl-tRNA editing enzyme that deacylates mischarged D-aminoacyl-tRNAs. Also deacylates mischarged glycyl-tRNA(Ala), protecting cells against glycine mischarging by AlaRS. Acts via tRNA-based rather than protein-based catalysis; rejects L-amino acids rather than detecting D-amino acids in the active site. By recycling D-aminoacyl-tRNA to D-amino acids and free tRNA molecules, this enzyme counteracts the toxicity associated with the formation of D-aminoacyl-tRNA entities in vivo and helps enforce protein L-homochirality. The sequence is that of D-aminoacyl-tRNA deacylase from Hydrogenovibrio crunogenus (strain DSM 25203 / XCL-2) (Thiomicrospira crunogena).